The chain runs to 87 residues: UPF0250 protein SG0794 (87 aa).

The protein belongs to the UPF0250 family.

The sequence is that of UPF0250 protein SG0794 from Sodalis glossinidius (strain morsitans).